A 403-amino-acid chain; its full sequence is Phosphopentomutase (403 aa).

6 residues coordinate Mn(2+): Asp13, Asp298, His303, Asp339, His340, and His351.

It belongs to the phosphopentomutase family. The cofactor is Mn(2+).

It localises to the cytoplasm. The enzyme catalyses 2-deoxy-alpha-D-ribose 1-phosphate = 2-deoxy-D-ribose 5-phosphate. It catalyses the reaction alpha-D-ribose 1-phosphate = D-ribose 5-phosphate. The protein operates within carbohydrate degradation; 2-deoxy-D-ribose 1-phosphate degradation; D-glyceraldehyde 3-phosphate and acetaldehyde from 2-deoxy-alpha-D-ribose 1-phosphate: step 1/2. In terms of biological role, isomerase that catalyzes the conversion of deoxy-ribose 1-phosphate (dRib-1-P) and ribose 1-phosphate (Rib-1-P) to deoxy-ribose 5-phosphate (dRib-5-P) and ribose 5-phosphate (Rib-5-P), respectively. This Streptococcus pyogenes serotype M12 (strain MGAS2096) protein is Phosphopentomutase.